A 151-amino-acid chain; its full sequence is 3-hydroxyacyl-[acyl-carrier-protein] dehydratase FabZ (151 aa).

His49 is an active-site residue.

It belongs to the thioester dehydratase family. FabZ subfamily.

The protein localises to the cytoplasm. The enzyme catalyses a (3R)-hydroxyacyl-[ACP] = a (2E)-enoyl-[ACP] + H2O. Involved in unsaturated fatty acids biosynthesis. Catalyzes the dehydration of short chain beta-hydroxyacyl-ACPs and long chain saturated and unsaturated beta-hydroxyacyl-ACPs. In Bordetella parapertussis (strain 12822 / ATCC BAA-587 / NCTC 13253), this protein is 3-hydroxyacyl-[acyl-carrier-protein] dehydratase FabZ.